We begin with the raw amino-acid sequence, 510 residues long: Xylose import ATP-binding protein XylG (510 aa).

ABC transporter domains follow at residues 5–242 (LEMK…VGRE) and 259–505 (LRVE…LRSE). 37–44 (GENGSGKS) lines the ATP pocket.

It belongs to the ABC transporter superfamily. Xylose importer (TC 3.A.1.2.4) family. The complex is composed of two ATP-binding proteins (XylG), two transmembrane proteins (XylH) and a solute-binding protein (XylF).

It localises to the cell inner membrane. The enzyme catalyses D-xylose(out) + ATP + H2O = D-xylose(in) + ADP + phosphate + H(+). Its function is as follows. Part of the ABC transporter complex XylFGH involved in xylose import. Responsible for energy coupling to the transport system. This chain is Xylose import ATP-binding protein XylG, found in Yersinia pestis.